The primary structure comprises 103 residues: Small ribosomal subunit protein uS10 (103 aa).

It belongs to the universal ribosomal protein uS10 family. As to quaternary structure, part of the 30S ribosomal subunit.

Its function is as follows. Involved in the binding of tRNA to the ribosomes. The polypeptide is Small ribosomal subunit protein uS10 (Persephonella marina (strain DSM 14350 / EX-H1)).